Consider the following 316-residue polypeptide: Acetyl-coenzyme A carboxylase carboxyl transferase subunit alpha (316 aa).

Positions 39 to 293 constitute a CoA carboxyltransferase C-terminal domain; sequence KLEEKNAQLT…KKHLQANLTN (255 aa).

Belongs to the AccA family. In terms of assembly, acetyl-CoA carboxylase is a heterohexamer composed of biotin carboxyl carrier protein (AccB), biotin carboxylase (AccC) and two subunits each of ACCase subunit alpha (AccA) and ACCase subunit beta (AccD).

Its subcellular location is the cytoplasm. It catalyses the reaction N(6)-carboxybiotinyl-L-lysyl-[protein] + acetyl-CoA = N(6)-biotinyl-L-lysyl-[protein] + malonyl-CoA. Its pathway is lipid metabolism; malonyl-CoA biosynthesis; malonyl-CoA from acetyl-CoA: step 1/1. In terms of biological role, component of the acetyl coenzyme A carboxylase (ACC) complex. First, biotin carboxylase catalyzes the carboxylation of biotin on its carrier protein (BCCP) and then the CO(2) group is transferred by the carboxyltransferase to acetyl-CoA to form malonyl-CoA. The sequence is that of Acetyl-coenzyme A carboxylase carboxyl transferase subunit alpha from Coxiella burnetii (strain CbuK_Q154) (Coxiella burnetii (strain Q154)).